A 768-amino-acid polypeptide reads, in one-letter code: Ribosomal RNA large subunit methyltransferase K/L (768 aa).

One can recognise a THUMP domain in the interval 60-175 (DLYKICLWSR…DKQAELYLDL (116 aa)).

This sequence belongs to the methyltransferase superfamily. RlmKL family.

It localises to the cytoplasm. The catalysed reaction is guanosine(2445) in 23S rRNA + S-adenosyl-L-methionine = N(2)-methylguanosine(2445) in 23S rRNA + S-adenosyl-L-homocysteine + H(+). It catalyses the reaction guanosine(2069) in 23S rRNA + S-adenosyl-L-methionine = N(2)-methylguanosine(2069) in 23S rRNA + S-adenosyl-L-homocysteine + H(+). In terms of biological role, specifically methylates the guanine in position 2445 (m2G2445) and the guanine in position 2069 (m7G2069) of 23S rRNA. The protein is Ribosomal RNA large subunit methyltransferase K/L of Psychrobacter arcticus (strain DSM 17307 / VKM B-2377 / 273-4).